We begin with the raw amino-acid sequence, 105 residues long: uncharacterized protein (105 aa).

Transmembrane regions (helical) follow at residues 14–34 (ILLM…IVAW), 41–61 (ETVC…FAFL), and 80–100 (VGFT…IFTI).

The protein resides in the cell membrane. This is an uncharacterized protein from Treponema pallidum (strain Nichols).